Consider the following 310-residue polypeptide: Putative S-adenosyl-L-methionine-dependent methyltransferase MMAR_0356 (310 aa).

Residues aspartate 137 and aspartate 166–leucine 167 contribute to the S-adenosyl-L-methionine site.

Belongs to the UPF0677 family.

Exhibits S-adenosyl-L-methionine-dependent methyltransferase activity. The polypeptide is Putative S-adenosyl-L-methionine-dependent methyltransferase MMAR_0356 (Mycobacterium marinum (strain ATCC BAA-535 / M)).